Here is a 3010-residue protein sequence, read N- to C-terminus: MSTNPKPQRKTKRNTNRRPQDVKFPGGGQIVGGVYLLPRRGPRLGVRATRKTSERSQPRGRRQPIPKARRPEGRTWAQPGYPWPLYGNEGMGWAGWLLSPRGSRPSWGPTDPRRRSRNLGKVIDTLTCGFADLMGYIPLVGAPLGGAARALAHGVRVLEDGVNYATGNLPGCSFSIFLLALLSCLTIPASAYEVRNVSGIYHVTNDCSNSSIVYEAADMIMHTPGCVPCVRESNFSRCWVALTPTLAARNSSIPTTTIRRHVDLLVGAAALCSAMYVGDLCGSVFLVSQLFTFSPRRYETVQDCNCSIYPGHVSGHRMAWDMMMNWSPTTALVVSQLLRIPQAVVDMVAGAHWGVLAGLAYYSMVGNWAKVLIVMLLFAGVDGHTHVTGGRVASSTQSLVSWLSQGPSQKIQLVNTNGSWHINRTALNCNDSLQTGFIAALFYAHRFNASGCPERMASCRPIDEFAQGWGPITHDMPESSDQRPYCWHYAPRPCGIVPASQVCGPVYCFTPSPVVVGTTDRFGAPTYSWGENETDVLLLSNTRPPQGNWFGCTWMNSTGFTKTCGGPPCNIGGVGNNTLVCPTDCFRKHPEATYTKCGSGPWLTPRCMVDYPYRLWHYPCTVNFTVFKVRMYVGGVEHRLNAACNWTRGERCDLEDRDRSELSPLLLSTTEWQILPCSFTTLPALSTGLIHLHRNIVDVQYLYGIGSAVVSFAIKWEYILLLFLLLADARVCACLWMMLLIAQAEATLENLVVLNAASVAGAHGLLSFLVFFCAAWYIKGRLVPGAAYALYGVWPLLLLLLALPPRAYAMDREMAASCGGAVFVGLVLLTLSPYYKVFLARLIWWLQYFITRAEAHLQVWVPPLNVRGGRDAIILLTCAVHPELIFDITKLLLAILGPLMVLQAGITRVPYFVRAQGLIRACMLVRKVAGGHYVQMAFMKLAALTGTYVYDHLTPLRDWAHAGLRDLAVAVEPVVFSDMETKLITWGADTAACGDIISGLPVSARRGKEILLGPADSFGEQGWRLLAPITAYSQQTRGLLGCIITSLTGRDKNQVDGEVQVLSTATQSFLATCVNGVCWTVYHGAGSKTLAGPKGPITQMYTNVDQDLVGWPAPPGARSMTPCTCGSSDLYLVTRHADVVPVRRRGDSRGSLLSPRPISYLKGSSGGPLLCPSGHVVGIFRAAVCTRGVAKAVDFIPVESMETTMRSPVFTDNSSPPAVPQTFQVAHLHAPTGSGKSTKVPAAYAAQGYKVLVLNPSVAATLGFGAYMSKAHGIEPNIRTGVRTITTGGPITYSTYCKFLADGGCSGGAYDIIICDECHSTDSTTILGIGTVLDQAETAGARLVVLATATPPGSITVPHPNIEEVALSNTGEIPFYGKAIPIEAIKGGRHLIFCHSKKKCDELAAKLTGLGLNAVAYYRGLDVSVIPTSGDVVVVATDALMTGFTGDFDSVIDCNTCVTQTVDFSLDPTFTIETTTLPQDAVSRAQRRGRTGRGRSGIYRFVTPGERPSGMFDSSVLCECYDAGCAWYELTPAETSVRLRAYLNTPGLPVCQDHLEFWESVFTGLTHIDAHFLSQTKQAGDNLPYLVAYQATVCARAQAPPPSWDQMWKCLIRLKPTLHGPTPLLYRLGAVQNEVTLTHPITKYIMACMSADLEVVTSTWVLVGGVLAALAAYCLTTGSVVIVGRIILSGRPAVIPDREVLYQEFDEMEECASHLPYIEQGMQLAEQFKQKALGLLQTATKQAEAAAPVVESKWRALEVFWAKHMWNFISGIQYLAGLSTLPGNPAIASLMAFTASITSPLTTQNTLLFNILGGWVAAQLAPPSAASAFVGAGIAGAAVGSIGLGKVLVDILAGYGAGVAGALVAFKVMSGEMPSTEDLVNLLPAILSPGALVVGVVCAAILRRHVGPGEGAVQWMNRLIAFASRGNHVSPTHYVPESDAAARVTQILSSLTITQLLKRLHQWINEDCSTPCSGSWLKDVWDWICTVLSDFKTWLQSKLLPRLPGLPFLSCQRGYKGVWRGDGIMQTTCPCGAQITGHVKNGSMRIVGPKTCSNTWHGTFPINAYTTGPCTPSPAPNYSRALWRVAAEEYVEVTRVGDFHYVTGMTTDNVKCPCQVPAPEFFTEVDGVRLHRYAPVCKPLLREEVVFQVGLNQYLVGSQLPCEPEPDVAVLTSMLTDPSHITAETAKRRLARGSPPSLASSSASQLSAPSLKATCTTHHDSPDADLIEANLLWRQEMGGNITRVESENKVVILDSFDPIRAVEDEREISVPAEILRKPRKFPPALPIWARPDYNPPLLESWKDPDYVPPVVHGCPLPSTKAPPIPPPRRKRTVVLTESTVSSALAELATKTFGSSGSSAVDSGTATGPPDQASDDGDKGSDVESYSSMPPLEGEPGDPDLSDGSWSTVSGEAGEDVVCCSMSYTWTGALITPCAAEESKLPINPLSNSLLRHHSMVYSTTSRSASLRQKKVTFDRLQVLDDHYRDVLKEMKAKASTVKARLLSIEEACKLTPPHSAKSKFGYGAKDVRSLSSRAVNHIRSVWEDLLEDTETPIDTTIMAKNEVFCVQPEKGGRKPARLIVFPDLGVRVCEKMALYDVVSTLPQAVMGPSYGFQYSPGQRVEFLVNTWKSKKCPMGFSYDTRCFDSTVTENDIRTEESIYQCCDLAPEARQAIRSLTERLYVGGPLTNSKGQNCGYRRCRASGVLTTSCGNTLTCYLKATAACRAAKLQDCTMLVNGDDLVVICESAGTQEDAAALRAFTEAMTRYSAPPGDPPQPEYDLELITSCSSNVSVAHDASGKRVYYLTRDPTTPLARAAWETVRHTPVNSWLGNIIMYAPTLWARMILMTHFFSILLAQEQLEKALDCQIYGACYSIEPLDLPQIIERLHGLSAFSLHSYSPGEINRVASCLRKLGVPPLRVWRHRARSVRAKLLSQGGRAATCGKYLFNWAVKTKLKLTPIPAASQLDLSGWFVAGYNGGDIYHSLSRARPRWFMLCLLLLSVGVGIYLLPNR.

At Ser2 the chain carries N-acetylserine; by host. The tract at residues 2–23 is interaction with STAT1; sequence STNPKPQRKTKRNTNRRPQDVK. The interaction with EIF2AK2/PKR stretch occupies residues 2–58; sequence STNPKPQRKTKRNTNRRPQDVKFPGGGQIVGGVYLLPRRGPRLGVRATRKTSERSQP. The tract at residues 2–59 is interaction with DDX3X; that stretch reads STNPKPQRKTKRNTNRRPQDVKFPGGGQIVGGVYLLPRRGPRLGVRATRKTSERSQPR. The interval 2–75 is disordered; that stretch reads STNPKPQRKT…PKARRPEGRT (74 aa). Residues 2–168 are Cytoplasmic-facing; that stretch reads STNPKPQRKT…EDGVNYATGN (167 aa). 2 short sequence motifs (nuclear localization signal) span residues 5–13 and 38–43; these read PKPQRKTKR and PRRGPR. The span at 7-16 shows a compositional bias: basic residues; the sequence is PQRKTKRNTN. Low complexity predominate over residues 32 to 47; sequence GGVYLLPRRGPRLGVR. Ser53 carries the phosphoserine; by host modification. 2 short sequence motifs (nuclear localization signal) span residues 58–64 and 66–71; these read PRGRRQP and PKARRP. Basic residues predominate over residues 58–68; it reads PRGRRQPIPKA. A Phosphoserine; by host modification is found at Ser99. The segment at 112–152 is important for endoplasmic reticulum and mitochondrial localization; it reads PRRRSRNLGKVIDTLTCGFADLMGYIPLVGAPLGGAARALA. Ser116 is modified (phosphoserine; by host PKA). The segment at 122–173 is interaction with APOA2; sequence VIDTLTCGFADLMGYIPLVGAPLGGAARALAHGVRVLEDGVNYATGNLPGCS. The segment at 164–167 is important for lipid droplets localization; sequence YATG. A helical membrane pass occupies residues 169-189; the sequence is LPGCSFSIFLLALLSCLTIPA. The propeptide at 178-191 is ER anchor for the core protein, removed in mature form by host signal peptidase; that stretch reads LLALLSCLTIPASA. At 190 to 358 the chain is on the lumenal side; it reads SAYEVRNVSG…AGAHWGVLAG (169 aa). N-linked (GlcNAc...) asparagine; by host glycosylation is found at Asn196, Asn209, and Asn234. Positions 265–296 are important for fusion; it reads LVGAAALCSAMYVGDLCGSVFLVSQLFTFSPR. Asn305 is a glycosylation site (N-linked (GlcNAc...) asparagine; by host). Residues 359–379 traverse the membrane as a helical segment; the sequence is LAYYSMVGNWAKVLIVMLLFA. The Lumenal segment spans residues 380-725; it reads GVDGHTHVTG…WEYILLLFLL (346 aa). 2 O-linked (Hex...) threonine; by host glycosylation sites follow: Thr385 and Thr396. The segment at 385-411 is HVR1; sequence THVTGGRVASSTQSLVSWLSQGPSQKI. O-linked (Hex...) serine; by host glycosylation is found at Ser401 and Ser404. 4 N-linked (GlcNAc...) (high mannose) asparagine; by host glycosylation sites follow: Asn417, Asn423, Asn430, and Asn448. 4 cysteine pairs are disulfide-bonded: Cys429/Cys552, Cys452/Cys459, Cys486/Cys494, and Cys503/Cys508. An O-linked (Hex...) threonine; by host glycan is attached at Thr473. The tract at residues 474 to 482 is HVR2; sequence HDMPESSDQ. The tract at residues 480–493 is CD81-binding 1; it reads SDQRPYCWHYAPRP. A glycan (O-linked (Hex...) threonine; by host) is linked at Thr518. Asn532 carries N-linked (GlcNAc...) (high mannose) asparagine; by host glycosylation. Positions 544 to 551 are CD81-binding 2; that stretch reads PPQGNWFG. N-linked (GlcNAc...) (high mannose) asparagine; by host glycosylation occurs at Asn556. A disulfide bridge links Cys564 with Cys569. The N-linked (GlcNAc...) (high mannose) asparagine; by host glycan is linked to Asn576. 3 disulfide bridges follow: Cys581/Cys585, Cys597/Cys620, and Cys607/Cys644. N-linked (GlcNAc...) (high mannose) asparagine; by host glycosylation is found at Asn623 and Asn645. Cys652 and Cys677 form a disulfide bridge. The segment at 660–671 is EIF2AK2/eIF2-alpha phosphorylation homology domain (PePHD); that stretch reads SELSPLLLSTTE. A helical membrane pass occupies residues 726 to 746; sequence LADARVCACLWMMLLIAQAEA. The Lumenal segment spans residues 747–757; the sequence is TLENLVVLNAA. The helical transmembrane segment at 758–778 threads the bilayer; that stretch reads SVAGAHGLLSFLVFFCAAWYI. Over 779 to 781 the chain is Cytoplasmic; the sequence is KGR. Residues 782–803 form a helical membrane-spanning segment; sequence LVPGAAYALYGVWPLLLLLLAL. The Lumenal segment spans residues 804 to 813; it reads PPRAYAMDRE. The helical transmembrane segment at 814 to 834 threads the bilayer; that stretch reads MAASCGGAVFVGLVLLTLSPY. Residues 835–838 lie on the Cytoplasmic side of the membrane; the sequence is YKVF. The helical transmembrane segment at 839 to 859 threads the bilayer; that stretch reads LARLIWWLQYFITRAEAHLQV. Topologically, residues 860–881 are lumenal; the sequence is WVPPLNVRGGRDAIILLTCAVH. Residues 882–902 form a helical membrane-spanning segment; that stretch reads PELIFDITKLLLAILGPLMVL. One can recognise a Peptidase C18 domain in the interval 903-1026; the sequence is QAGITRVPYF…SFGEQGWRLL (124 aa). Residues 903–1657 are Cytoplasmic-facing; it reads QAGITRVPYF…CMSADLEVVT (755 aa). Residues 904–1206 form a protease NS2-3 region; sequence AGITRVPYFV…PVESMETTMR (303 aa). Cys922 carries S-palmitoyl cysteine; by host lipidation. Positions 929 to 949 are interaction with host SCPS1; that stretch reads AGGHYVQMAFMKLAALTGTYV. Active-site for protease NS2 activity; shared with dimeric partner residues include His952, Glu972, and Cys993. Residues 1027 to 1208 form the Peptidase S29 domain; it reads APITAYSQQT…ESMETTMRSP (182 aa). Residues His1083 and Asp1107 each act as charge relay system; for serine protease NS3 activity in the active site. Positions 1123 and 1125 each coordinate Zn(2+). Ser1165 (charge relay system; for serine protease NS3 activity) is an active-site residue. Zn(2+) contacts are provided by Cys1171 and His1175. One can recognise a Helicase ATP-binding domain in the interval 1217 to 1369; sequence PAVPQTFQVA…PNIEEVALSN (153 aa). 1230 to 1237 lines the ATP pocket; it reads APTGSGKS. Positions 1237 and 1317 each coordinate Mg(2+). The DECH box motif lies at 1316-1319; that stretch reads DECH. An RNA-binding region spans residues 1486 to 1497; the sequence is QRRGRTGRGRSG. A helical membrane pass occupies residues 1658 to 1678; that stretch reads STWVLVGGVLAALAAYCLTTG. Residues 1679 to 1690 form an NS3-binding region; that stretch reads SVVIVGRIILSG. Residues 1679 to 1805 lie on the Cytoplasmic side of the membrane; it reads SVVIVGRIIL…SITSPLTTQN (127 aa). The chain crosses the membrane as a helical span at residues 1806 to 1826; sequence TLLFNILGGWVAAQLAPPSAA. The Lumenal segment spans residues 1827–1828; that stretch reads SA. The helical transmembrane segment at 1829–1849 threads the bilayer; that stretch reads FVGAGIAGAAVGSIGLGKVLV. The glycine zipper stretch occupies residues 1833–1861; that stretch reads GIAGAAVGSIGLGKVLVDILAGYGAGVAG. Asp1850 is a topological domain (cytoplasmic). Residues 1851-1871 traverse the membrane as a helical segment; the sequence is ILAGYGAGVAGALVAFKVMSG. Topologically, residues 1872–1881 are lumenal; sequence EMPSTEDLVN. A helical membrane pass occupies residues 1882-1902; it reads LLPAILSPGALVVGVVCAAIL. Over 1903–1972 the chain is Cytoplasmic; sequence RRHVGPGEGA…WINEDCSTPC (70 aa). 2 S-palmitoyl cysteine; by host lipidation sites follow: Cys1968 and Cys1972. Residues 1973 to 2002 lie within the membrane without spanning it; that stretch reads SGSWLKDVWDWICTVLSDFKTWLQSKLLPR. Residues 1978 to 1998 are membrane-binding; the sequence is KDVWDWICTVLSDFKTWLQSK. Topologically, residues 2003–2989 are cytoplasmic; the sequence is LPGLPFLSCQ…YHSLSRARPR (987 aa). An RNA-binding region spans residues 2005–2221; sequence GLPFLSCQRG…KATCTTHHDS (217 aa). Cys2011, Cys2029, Cys2031, and Cys2052 together coordinate Zn(2+). The interval 2120–2208 is FKBP8-binding; the sequence is EFFTEVDGVR…ASSSASQLSA (89 aa). Residues 2120 to 2332 form a transcriptional activation region; sequence EFFTEVDGVR…PIPPPRRKRT (213 aa). The interval 2135–2139 is interaction with non-structural protein 4A; sequence PVCKP. Residues 2187-2219 form a disordered region; sequence KRRLARGSPPSLASSSASQLSAPSLKATCTTHH. The interval 2189–2441 is interaction with host SKP2; sequence RLARGSPPSL…PCAAEESKLP (253 aa). Position 2194 is a phosphoserine; by host; in p56 (Ser2194). Positions 2194–2211 are enriched in low complexity; the sequence is SPPSLASSSASQLSAPSL. Phosphoserine; by host; in p58 is present on residues Ser2197, Ser2201, Ser2204, Ser2207, and Ser2210. 2 ISDR regions span residues 2206-2245 and 2210-2249; these read LSAPSLKATCTTHHDSPDADLIEANLLWRQEMGGNITRVE and SLKATCTTHHDSPDADLIEANLLWRQEMGGNITRVESENK. The interval 2210–2275 is EIF2AK2/PKR-binding; it reads SLKATCTTHH…REISVPAEIL (66 aa). Residues 2249–2306 are NS4B-binding; sequence KVVILDSFDPIRAVEDEREISVPAEILRKPRKFPPALPIWARPDYNPPLLESWKDPDY. An SH3-binding motif is present at residues 2322–2325; that stretch reads PPIP. Positions 2326-2334 match the Nuclear localization signal motif; it reads PPRRKRTVV. The segment at 2332–2441 is interaction with host IFI27; that stretch reads TVVLTESTVS…PCAAEESKLP (110 aa). Lys2350 is covalently cross-linked (Glycyl lysine isopeptide (Lys-Gly) (interchain with G-Cter in ubiquitin)). A compositionally biased stretch (polar residues) spans 2351–2365; sequence TFGSSGSSAVDSGTA. The interval 2351–2408 is disordered; it reads TFGSSGSSAVDSGTATGPPDQASDDGDKGSDVESYSSMPPLEGEPGDPDLSDGSWSTV. The V3 stretch occupies residues 2354–2377; the sequence is SSGSSAVDSGTATGPPDQASDDGD. Phosphoserine; by host is present on residues Ser2448 and Ser2461. Residues 2633–2751 enclose the RdRp catalytic domain; that stretch reads PMGFSYDTRC…ICESAGTQED (119 aa). The Mg(2+) site is built by Asp2639, Asp2737, and Asp2738. The helical transmembrane segment at 2990–3010 threads the bilayer; that stretch reads WFMLCLLLLSVGVGIYLLPNR.

The protein belongs to the hepacivirus polyprotein family. In terms of assembly, homooligomer. Interacts with E1 (via C-terminus). Interacts with the non-structural protein 5A. Interacts (via N-terminus) with host STAT1 (via SH2 domain); this interaction results in decreased STAT1 phosphorylation and ubiquitin-mediated proteasome-dependent STAT1 degradation, leading to decreased IFN-stimulated gene transcription. Interacts with host STAT3; this interaction constitutively activates STAT3. Interacts with host LTBR receptor. Interacts with host TNFRSF1A receptor and possibly induces apoptosis. Interacts with host HNRPK. Interacts with host YWHAE. Interacts with host UBE3A/E6AP. Interacts with host DDX3X. Interacts with host APOA2. Interacts with host RXRA protein. Interacts with host SP110 isoform 3/Sp110b; this interaction sequesters the transcriptional corepressor SP110 away from the nucleus. Interacts with host CREB3 nuclear transcription protein; this interaction triggers cell transformation. Interacts with host ACY3. Interacts with host C1QR1. Interacts with host RBM24; this interaction, which enhances the interaction of the mature core protein with 5'-UTR, may inhibit viral translation and favor replication. Interacts with host EIF2AK2/PKR; this interaction induces the autophosphorylation of EIF2AK2. Part of the viral assembly initiation complex composed of NS2, E1, E2, NS3, NS4A, NS5A and the mature core protein. Forms a heterodimer with envelope glycoprotein E2. Interacts with mature core protein. Interacts with protease NS2. The heterodimer E1/E2 interacts with host CLDN1; this interaction plays a role in viral entry into host cell. Interacts with host SPSB2 (via C-terminus). Part of the viral assembly initiation complex composed of NS2, E1, E2, NS3, NS4A, NS5A and the mature core protein. Interacts with host NEURL3; this interaction prevents E1 binding to glycoprotein E2. As to quaternary structure, forms a heterodimer with envelope glycoprotein E1. Interacts with host CD81 and SCARB1 receptors; these interactions play a role in viral entry into host cell. Interacts with host EIF2AK2/PKR; this interaction inhibits EIF2AK2 and probably allows the virus to evade the innate immune response. Interacts with host CD209/DC-SIGN and CLEC4M/DC-SIGNR. Interact with host SPCS1; this interaction is essential for viral particle assembly. Interacts with protease NS2. The heterodimer E1/E2 interacts with host CLDN1; this interaction plays a role in viral entry into host cell. Part of the viral assembly initiation complex composed of NS2, E1, E2, NS3, NS4A, NS5A and the mature core protein. Interacts with host SLC3A2/4F2hc; the interaction may facilitate viral entry into host cell. Interacts with human PLSCR1. In terms of assembly, homohexamer. Homoheptamer. Interacts with protease NS2. Homodimer. Interacts with host SPCS1; this interaction is essential for viral particle assembly. Interacts with envelope glycoprotein E1. Interacts with envelope glycoprotein E2. Interacts with viroporin p7. Interacts with serine protease/helicase NS3. Part of the replication complex composed of NS2, NS3, NS4A, NS4B, NS5A and the RNA-directed RNA polymerase embedded in an ER-derived membranous web. Part of the viral assembly initiation complex composed of NS2, E1, E2, NS3, NS4A, NS5A and the mature core protein. As to quaternary structure, interacts with protease NS2. Interacts with non-structural protein 4A; this interaction stabilizes the folding of NS3 serine protease. NS3-NS4A interaction is essential for NS3 activation and allows membrane anchorage of the latter. NS3/NS4A complex also prevents phosphorylation of host IRF3, thus preventing the establishment of dsRNA induced antiviral state. Interacts with host MAVS; this interaction leads to the cleavage and inhibition of host MAVS. Interacts with host TICAM1; this interaction leads to the cleavage and inhibition of host TICAM1. Interacts with host TANK-binding kinase/TBK1; this interaction results in the inhibition of the association between TBK1 and IRF3, which leads to the inhibition of IRF3 activation. Interacts with host RBM24. Part of the replication complex composed of NS2, NS3, NS4A, NS4B, NS5A and the RNA-directed RNA polymerase embedded in an ER-derived membranous web. Part of the viral assembly initiation complex composed of NS2, E1, E2, NS3, NS4A, NS5A and the mature core protein. In terms of assembly, interacts with NS3 serine protease; this interaction stabilizes the folding of NS3 serine protease. NS3-NS4A interaction is essential for NS3 activation and allows membrane anchorage of the latter. Interacts with non-structural protein 5A (via N-terminus). Part of the replication complex composed of NS2, NS3, NS4A, NS4B, NS5A and the RNA-directed RNA polymerase embedded in an ER-derived membranous web. Part of the viral assembly initiation complex composed of NS2, E1, E2, NS3, NS4A, NS5A and the mature core protein. Homomultimer. Interacts with non-structural protein NS5A. Interacts with host PLA2G4C; this interaction likely initiates the recruitment of replication complexes to lipid droplets. Interacts with host STING; this interaction disrupts the interaction between STING and TBK1 thereby suppressing the interferon signaling. Part of the replication complex composed of NS2, NS3, NS4A, NS4B, NS5A and the RNA-directed RNA polymerase embedded in an ER-derived membranous web. As to quaternary structure, monomer. Homodimer; dimerization is required for RNA-binding. Interacts with the mature core protein. Interacts (via N-terminus) with non-structural protein 4A. Interacts with non-structural protein 4B. Interacts with RNA-directed RNA polymerase. Part of the viral assembly initiation complex composed of NS2, E1, E2, NS3, NS4A, NS5A and the mature core protein. Part of the replication complex composed of NS2, NS3, NS4A, NS4B, NS5A and the RNA-directed RNA polymerase. Interacts with host GRB2. Interacts with host BIN1. Interacts with host PIK3R1. Interacts with host SRCAP. Interacts with host FKBP8. Interacts with host VAPB. Interacts with host EIF2AK2/PKR; this interaction leads to disruption of EIF2AK2 dimerization by NS5A and probably allows the virus to evade the innate immune response. Interacts (via N-terminus) with host PACSIN2 (via N-terminus); this interaction attenuates protein kinase C alpha-mediated phosphorylation of PACSIN2 by disrupting the interaction between PACSIN2 and PRKCA. Interacts (via N-terminus) with host SRC kinase (via SH2 domain). Interacts with most Src-family kinases. Interacts with host IFI27 and SKP2; promotes the ubiquitin-mediated proteasomal degradation of NS5A. Interacts with host GPS2. Interacts with host TNFRSF21; this interaction allows the modulation by the virus of JNK, p38 MAPK, STAT3, and Akt signaling pathways in a DR6-dependent manner. Interacts (via N-terminus) with host CIDEB (via N-terminus); this interaction seems to regulate the association of HCV particles with APOE. Interacts with host CHKA/Choline Kinase-alpha; CHKA bridges host PI4KA and NS5A and potentiates NS5A-stimulated PI4KA activity, which then facilitates the targeting of the ternary complex to the ER for viral replication. Interacts with host SPSB2 (via C-terminus); this interaction targets NS5A for ubiquitination and degradation. Interacts with host RAB18; this interaction may promote the association of NS5A and other replicase components with lipid droplets. Interacts (via region D2) with host PPIA/CYPA; the interaction stimulates RNA-binding ability of NS5A and is dependent on the peptidyl-prolyl cis-trans isomerase activity of PPIA/CYPA. Interacts with host TRIM14; this interaction induces the degradation of NS5A. In terms of assembly, homooligomer. Interacts with non-structural protein 5A. Interacts with host VAPB. Interacts with host PRK2/PKN2. Interacts with host HNRNPA1 and SEPT6; these interactions facilitate the viral replication. Part of the replication complex composed of NS2, NS3, NS4A, NS4B, NS5A and the RNA-directed RNA polymerase. Zn(2+) serves as cofactor. Mg(2+) is required as a cofactor. Post-translationally, specific enzymatic cleavages in vivo yield mature proteins. The structural proteins, core, E1, E2 and p7 are produced by proteolytic processing by host signal peptidases. The core protein is synthesized as a 23 kDa precursor which is retained in the ER membrane through the hydrophobic signal peptide. Cleavage by the signal peptidase releases the 21 kDa mature core protein. The cleavage of the core protein precursor occurs between aminoacids 176 and 188 but the exact cleavage site is not known. Some degraded forms of the core protein appear as well during the course of infection. The other proteins (p7, NS2, NS3, NS4A, NS4B, NS5A and NS5B) are cleaved by the viral proteases. Autoprocessing between NS2 and NS3 is mediated by the NS2 cysteine protease catalytic domain and regulated by the NS3 N-terminal domain. Phosphorylated by host PKC and PKA. In terms of processing, ubiquitinated; mediated by UBE3A and leading to core protein subsequent proteasomal degradation. Post-translationally, highly N-glycosylated. Palmitoylation is required for NS2/3 autoprocessing and E2 recruitment to membranes. In terms of processing, palmitoylated. This modification may play a role in its polymerization or in protein-protein interactions. Post-translationally, cleaved by host caspases which are probably activated by the viral infection. Ubiquitinated. Ubiquitination, most probably at Lys-2350, mediated by host IFI27 and SKP2 leads to proteasomal degradation, restricting viral infection. In terms of processing, phosphorylated on serines in a basal form termed p56. p58 is a hyperphosphorylated form of p56. p56 and p58 coexist in the cell in roughly equivalent amounts. Hyperphosphorylation is dependent on the presence of NS4A. Host CSNK1A1/CKI-alpha or RPS6KB1 kinases may be responsible for NS5A phosphorylation. Phosphorylated NS5A is involved in viral replication. Post-translationally, tyrosine phosphorylation is essential for the interaction with host SRC. The N-terminus is phosphorylated by host PRK2/PKN2.

Its subcellular location is the host endoplasmic reticulum membrane. The protein localises to the host mitochondrion membrane. The protein resides in the virion. It localises to the host cytoplasm. It is found in the host nucleus. Its subcellular location is the host lipid droplet. The protein localises to the virion membrane. The protein resides in the host mitochondrion. It localises to the host cell membrane. It is found in the host perinuclear region. The catalysed reaction is Hydrolysis of four peptide bonds in the viral precursor polyprotein, commonly with Asp or Glu in the P6 position, Cys or Thr in P1 and Ser or Ala in P1'.. It catalyses the reaction a ribonucleoside 5'-triphosphate + H2O = a ribonucleoside 5'-diphosphate + phosphate + H(+). It carries out the reaction ATP + H2O = ADP + phosphate + H(+). The enzyme catalyses RNA(n) + a ribonucleoside 5'-triphosphate = RNA(n+1) + diphosphate. With respect to regulation, inhibited by the antiviral drug hexamethylene amiloride. Inhibition by amantadine appears to be genotype-dependent. Also inhibited by long-alkyl-chain iminosugar derivatives. Activity is up-regulated by PRK2/PKN2-mediated phosphorylation. Packages viral RNA to form a viral nucleocapsid, and promotes virion budding. Participates in the viral particle production as a result of its interaction with the non-structural protein 5A. Binds RNA and may function as a RNA chaperone to induce the RNA structural rearrangements taking place during virus replication. Modulates viral translation initiation by interacting with viral IRES and 40S ribosomal subunit. Affects various cell signaling pathways, host immunity and lipid metabolism. Prevents the establishment of cellular antiviral state by blocking the interferon-alpha/beta (IFN-alpha/beta) and IFN-gamma signaling pathways and by blocking the formation of phosphorylated STAT1 and promoting ubiquitin-mediated proteasome-dependent degradation of STAT1. Activates STAT3 leading to cellular transformation. Regulates the activity of cellular genes, including c-myc and c-fos. May repress the promoter of p53, and sequester CREB3 and SP110 isoform 3/Sp110b in the cytoplasm. Represses cell cycle negative regulating factor CDKN1A, thereby interrupting an important check point of normal cell cycle regulation. Targets transcription factors involved in the regulation of inflammatory responses and in the immune response: suppresses NF-kappa-B activation, and activates AP-1. Binds to dendritic cells (DCs) via C1QR1, resulting in down-regulation of T-lymphocytes proliferation. Alters lipid metabolism by interacting with hepatocellular proteins involved in lipid accumulation and storage. Induces up-regulation of FAS promoter activity, and thereby contributes to the increased triglyceride accumulation in hepatocytes (steatosis). Its function is as follows. Forms a heterodimer with envelope glycoprotein E2, which mediates virus attachment to the host cell, virion internalization through clathrin-dependent endocytosis and fusion with host membrane. Fusion with the host cell is most likely mediated by both E1 and E2, through conformational rearrangements of the heterodimer required for fusion rather than a classical class II fusion mechanism. E1/E2 heterodimer binds host apolipoproteins such as APOB and APOE thereby forming a lipo-viro-particle (LVP). APOE associated to the LVP allows the initial virus attachment to cell surface receptors such as the heparan sulfate proteoglycans (HSPGs), syndecan-1 (SDC1), syndecan-1 (SDC2), the low-density lipoprotein receptor (LDLR) and scavenger receptor class B type I (SCARB1). The cholesterol transfer activity of SCARB1 allows E2 exposure and binding of E2 to SCARB1 and the tetraspanin CD81. E1/E2 heterodimer binding on CD81 activates the epithelial growth factor receptor (EGFR) signaling pathway. Diffusion of the complex E1-E2-EGFR-SCARB1-CD81 to the cell lateral membrane allows further interaction with Claudin 1 (CLDN1) and occludin (OCLN) to finally trigger HCV entry. In terms of biological role, forms a heterodimer with envelope glycoprotein E1, which mediates virus attachment to the host cell, virion internalization through clathrin-dependent endocytosis and fusion with host membrane. Fusion with the host cell is most likely mediated by both E1 and E2, through conformational rearrangements of the heterodimer required for fusion rather than a classical class II fusion mechanism. The interaction between envelope glycoprotein E2 and host apolipoprotein E/APOE allows the proper assembly, maturation and infectivity of the viral particles. This interaction is probably promoted via the up-regulation of cellular autophagy by the virus. E1/E2 heterodimer binds host apolipoproteins such as APOB and APOE thereby forming a lipo-viro-particle (LVP). APOE associated to the LVP allows the initial virus attachment to cell surface receptors such as the heparan sulfate proteoglycans (HSPGs), syndecan-1 (SDC1), syndecan-1 (SDC2), the low-density lipoprotein receptor (LDLR) and scavenger receptor class B type I (SCARB1). The cholesterol transfer activity of SCARB1 allows E2 exposure and binding of E2 to SCARB1 and the tetraspanin CD81. E1/E2 heterodimer binding on CD81 activates the epithelial growth factor receptor (EGFR) signaling pathway. Diffusion of the complex E1-E2-EGFR-SCARB1-CD81 to the cell lateral membrane allows further interaction with Claudin 1 (CLDN1) and occludin (OCLN) to finally trigger HCV entry. Inhibits host EIF2AK2/PKR activation, preventing the establishment of an antiviral state. Viral ligand for CD209/DC-SIGN and CLEC4M/DC-SIGNR, which are respectively found on dendritic cells (DCs), and on liver sinusoidal endothelial cells and macrophage-like cells of lymph node sinuses. These interactions allow the capture of circulating HCV particles by these cells and subsequent facilitated transmission to permissive cells such as hepatocytes and lymphocyte subpopulations. The interaction between E2 and host amino acid transporter complex formed by SLC3A2 and SLC7A5/LAT1 may facilitate viral entry into host cell. Functionally, ion channel protein that acts as a viroporin and plays an essential role in the assembly, envelopment and secretion of viral particles. Regulates the host cell secretory pathway, which induces the intracellular retention of viral glycoproteins and favors assembly of viral particles. Creates a pore in acidic organelles and releases Ca(2+) and H(+) in the cytoplasm of infected cells, leading to a productive viral infection. High levels of cytoplasmic Ca(2+) may trigger membrane trafficking and transport of viral ER-associated proteins to viroplasms, sites of viral genome replication. This ionic imbalance induces the assembly of the inflammasome complex, which triggers the maturation of pro-IL-1beta into IL-1beta through the action of caspase-1. Targets also host mitochondria and induces mitochondrial depolarization. In addition of its role as a viroporin, acts as a lipid raft adhesion factor. Cysteine protease required for the proteolytic auto-cleavage between the non-structural proteins NS2 and NS3. The N-terminus of NS3 is required for the function of NS2 protease (active region NS2-3). Promotes the initiation of viral particle assembly by mediating the interaction between structural and non-structural proteins. Its function is as follows. Displays three enzymatic activities: serine protease with a chymotrypsin-like fold, NTPase and RNA helicase. NS3 serine protease, in association with NS4A, is responsible for the cleavages of NS3-NS4A, NS4A-NS4B, NS4B-NS5A and NS5A-NS5B. The NS3/NS4A complex prevents phosphorylation of host IRF3, thus preventing the establishment of dsRNA induced antiviral state. The NS3/NS4A complex induces host amino acid transporter component SLC3A2, thus contributing to HCV propagation. NS3 RNA helicase binds to RNA and unwinds both dsDNA and dsRNA in the 3' to 5' direction, and likely resolves RNA complicated stable secondary structures in the template strand. Binds a single ATP and catalyzes the unzipping of a single base pair of dsRNA. Inhibits host antiviral proteins TBK1 and IRF3 thereby preventing the establishment of an antiviral state. Cleaves host MAVS/CARDIF thereby preventing the establishment of an antiviral state. Cleaves host TICAM1/TRIF, thereby disrupting TLR3 signaling and preventing the establishment of an antiviral state. In terms of biological role, peptide cofactor which forms a non-covalent complex with the N-terminal of NS3 serine protease. The NS3/NS4A complex prevents phosphorylation of host IRF3, thus preventing the establishment of dsRNA induced antiviral state. The NS3/NS4A complex induces host amino acid transporter component SLC3A2, thus contributing to HCV propagation. Functionally, induces a specific membrane alteration that serves as a scaffold for the virus replication complex. This membrane alteration gives rise to the so-called ER-derived membranous web that contains the replication complex. NS4B self-interaction contributes to its function in membranous web formation. Promotes host TRIF protein degradation in a CASP8-dependent manner thereby inhibiting host TLR3-mediated interferon signaling. Disrupts the interaction between STING and TBK1 contributing to the inhibition of interferon signaling. Phosphorylated protein that is indispensable for viral replication and assembly. Both hypo- and hyperphosphorylated states are required for the viral life cycle. The hyperphosphorylated form of NS5A is an inhibitor of viral replication. Involved in RNA-binding and especially in binding to the viral genome. Zinc is essential for RNA-binding. Participates in the viral particle production as a result of its interaction with the mature viral core protein. Its interaction with host VAPB may target the viral replication complex to vesicles. Down-regulates viral IRES translation initiation. Mediates interferon resistance, presumably by interacting with and inhibiting host EIF2AK2/PKR. Prevents BIN1-induced apoptosis. Acts as a transcriptional activator of some host genes important for viral replication when localized in the nucleus. Via the interaction with host PACSIN2, modulates lipid droplet formation in order to promote virion assembly. Modulates TNFRSF21/DR6 signaling pathway for viral propagation. Its function is as follows. RNA-dependent RNA polymerase that performs primer-template recognition and RNA synthesis during viral replication. Initiates RNA transcription/replication at a flavin adenine dinucleotide (FAD), resulting in a 5'- FAD cap on viral RNAs. In this way, recognition of viral 5' RNA by host pattern recognition receptors can be bypassed, thereby evading activation of antiviral pathways. This chain is Genome polyprotein, found in Hepatitis C virus genotype 1b (isolate Japanese) (HCV).